Reading from the N-terminus, the 495-residue chain is Rho GTPase-activating protein 19 (495 aa).

The Rho-GAP domain occupies 98–304 (MSLKRKEKGV…FMIKHSQKLF (207 aa)). Disordered regions lie at residues 327–362 (KDDLDLLTSPGSKELQPLKSQKRSRLDSCHQEETQQ) and 393–495 (KHPS…SSSL). Basic and acidic residues-rich tracts occupy residues 350-362 (SRLDSCHQEETQQ), 433-452 (QERKSRDSTPEPKRVSKENV), and 470-481 (KSLEGQKEESCR).

Functionally, GTPase activator for the Rho-type GTPases by converting them to an inactive GDP-bound state. The chain is Rho GTPase-activating protein 19 (ARHGAP19) from Gallus gallus (Chicken).